A 67-amino-acid polypeptide reads, in one-letter code: MRTLCSLLLICCLLFSYTTPAANSIIGVSEMERCHKKGGYCYFYCFSSHKKIGSCFPEWPRCCKNIK.

The first 24 residues, 1 to 24 (MRTLCSLLLICCLLFSYTTPAANS), serve as a signal peptide directing secretion. 3 cysteine pairs are disulfide-bonded: cysteine 34/cysteine 62, cysteine 41/cysteine 55, and cysteine 45/cysteine 63.

It belongs to the beta-defensin family. In terms of tissue distribution, weakly expressed in adult and neonatal brain.

It is found in the secreted. Functionally, has antibacterial activity. The sequence is that of Beta-defensin 9 (Defb9) from Mus musculus (Mouse).